Consider the following 211-residue polypeptide: Histidine biosynthesis bifunctional protein HisIE (211 aa).

Residues 1–122 (MSVKAAEVSS…DPQEESQMVW (122 aa)) form a phosphoribosyl-AMP cyclohydrolase region. Residues 123–211 (LHQLEQLLAA…VINKLKERHK (89 aa)) are phosphoribosyl-ATP pyrophosphohydrolase.

This sequence in the N-terminal section; belongs to the PRA-CH family. In the C-terminal section; belongs to the PRA-PH family.

The protein resides in the cytoplasm. It catalyses the reaction 1-(5-phospho-beta-D-ribosyl)-ATP + H2O = 1-(5-phospho-beta-D-ribosyl)-5'-AMP + diphosphate + H(+). The catalysed reaction is 1-(5-phospho-beta-D-ribosyl)-5'-AMP + H2O = 1-(5-phospho-beta-D-ribosyl)-5-[(5-phospho-beta-D-ribosylamino)methylideneamino]imidazole-4-carboxamide. It participates in amino-acid biosynthesis; L-histidine biosynthesis; L-histidine from 5-phospho-alpha-D-ribose 1-diphosphate: step 2/9. The protein operates within amino-acid biosynthesis; L-histidine biosynthesis; L-histidine from 5-phospho-alpha-D-ribose 1-diphosphate: step 3/9. The chain is Histidine biosynthesis bifunctional protein HisIE from Vibrio vulnificus (strain YJ016).